The following is a 94-amino-acid chain: Large ribosomal subunit protein bL25 (94 aa).

The protein belongs to the bacterial ribosomal protein bL25 family. As to quaternary structure, part of the 50S ribosomal subunit; part of the 5S rRNA/L5/L18/L25 subcomplex. Contacts the 5S rRNA. Binds to the 5S rRNA independently of L5 and L18.

This is one of the proteins that binds to the 5S RNA in the ribosome where it forms part of the central protuberance. The polypeptide is Large ribosomal subunit protein bL25 (Salmonella gallinarum (strain 287/91 / NCTC 13346)).